Reading from the N-terminus, the 732-residue chain is Catalase-peroxidase (732 aa).

Residues 1-11 (MDAKTDDKDGG) show a composition bias toward basic and acidic residues. A disordered region spans residues 1 to 24 (MDAKTDDKDGGKCPFPHGGGRGRR). The tryptophyl-tyrosyl-methioninium (Trp-Tyr) (with M-245) cross-link spans 97–219 (WHSAGTYRTT…LGAVQMGLIY (123 aa)). Residue His98 is the Proton acceptor of the active site. A cross-link (tryptophyl-tyrosyl-methioninium (Tyr-Met) (with W-97)) is located at residues 219 to 245 (YVNPEGPNGNPDPVAAAKDIRETFARM). His260 is a binding site for heme b.

The protein belongs to the peroxidase family. Peroxidase/catalase subfamily. As to quaternary structure, homodimer or homotetramer. Heme b serves as cofactor. Post-translationally, formation of the three residue Trp-Tyr-Met cross-link is important for the catalase, but not the peroxidase activity of the enzyme.

The catalysed reaction is H2O2 + AH2 = A + 2 H2O. It carries out the reaction 2 H2O2 = O2 + 2 H2O. Functionally, bifunctional enzyme with both catalase and broad-spectrum peroxidase activity. The chain is Catalase-peroxidase from Rhodopseudomonas palustris (strain HaA2).